A 247-amino-acid polypeptide reads, in one-letter code: Submandibular gland secretory Glx-rich protein CB (247 aa).

A signal peptide spans 1–18 (MLVVLLTAALLALSSAQG). Positions 14 to 219 (SSAQGTDEEV…PQHYRGRPPK (206 aa)) are disordered. Low complexity-rich tracts occupy residues 39–50 (PVDSGSDPPSAD), 58–71 (EGESAPPANEEPPA), 81–93 (QQEPTQAENQEPP), 104–116 (QQEPTQAENQEPP), 126–139 (QQQQPTQAENQEPP), 150–159 (QQESTQAENQ), and 178–196 (VESPPSSPENSQEQPQQTN). Tandem repeats lie at residues 67–89 (EEPPATSGSEEEQQQQEPTQAEN), 90–112 (QEPPATSGSEEEQQQQEPTQAEN), 113–135 (QEPPATSGSEEEQQQQQPTQAEN), 136–158 (QEPPATSGSEEEQQQQESTQAEN), and 159–181 (QEPSDSAGEGQETQPEEGNVESP). The tract at residues 67–181 (EEPPATSGSE…QPEEGNVESP (115 aa)) is 5 X 23 AA tandem repeats. The span at 197-212 (PEEKPPAPKTQEEPQH) shows a compositional bias: basic and acidic residues.

As to expression, submandibular gland acinar cells.

It is found in the secreted. Its function is as follows. GRP proteins have a marked affinity for hydroxyapatite. They may play a role in the formation of the protective acquired pellicle at the saliva-tooth interface. The chain is Submandibular gland secretory Glx-rich protein CB (Grpcb) from Rattus norvegicus (Rat).